A 152-amino-acid polypeptide reads, in one-letter code: Proteolipid protein 2 (152 aa).

Asn-18 carries an N-linked (GlcNAc...) asparagine glycan. The region spanning 19–137 (FSRTRKGILL…DAYVTFPVRQ (119 aa)) is the MARVEL domain. Transmembrane regions (helical) follow at residues 25-45 (GILLFAEIILCLVILICFSAS), 48-68 (GYSSLSVIEMILAAIFFVVYM), and 85-105 (FFRTLIAAILYLITSIVVLVE). Asn-108 carries an N-linked (GlcNAc...) asparagine glycan. The chain crosses the membrane as a helical span at residues 112-132 (IVAGVLGLIATCLFGYDAYVT).

Enriched in colonic mucosa. The expression of A4 follows a gradient along the crypto-villus axis with the most abundant message occurring in the lower half of the crypt.

Its subcellular location is the membrane. Functionally, may play a role in cell differentiation in the intestinal epithelium. The sequence is that of Proteolipid protein 2 (PLP2) from Homo sapiens (Human).